The primary structure comprises 200 residues: Holliday junction branch migration complex subunit RuvA (200 aa).

The tract at residues 1-63 is domain I; the sequence is MIASVRGVVT…EDSLTLYGFA (63 aa). The domain II stretch occupies residues 64 to 142; that stretch reads DDNAKALFEL…PVPVGGDGAA (79 aa). The segment at 143–151 is flexible linker; that stretch reads GVTTGAWPE. Residues 151 to 200 form a domain III region; it reads EQVRQALVGLGWTAGQAEQAVAAVAETVDGEVPPVPVLLRQAIRLLGRTR.

The protein belongs to the RuvA family. In terms of assembly, homotetramer. Forms an RuvA(8)-RuvB(12)-Holliday junction (HJ) complex. HJ DNA is sandwiched between 2 RuvA tetramers; dsDNA enters through RuvA and exits via RuvB. An RuvB hexamer assembles on each DNA strand where it exits the tetramer. Each RuvB hexamer is contacted by two RuvA subunits (via domain III) on 2 adjacent RuvB subunits; this complex drives branch migration. In the full resolvosome a probable DNA-RuvA(4)-RuvB(12)-RuvC(2) complex forms which resolves the HJ.

The protein localises to the cytoplasm. Functionally, the RuvA-RuvB-RuvC complex processes Holliday junction (HJ) DNA during genetic recombination and DNA repair, while the RuvA-RuvB complex plays an important role in the rescue of blocked DNA replication forks via replication fork reversal (RFR). RuvA specifically binds to HJ cruciform DNA, conferring on it an open structure. The RuvB hexamer acts as an ATP-dependent pump, pulling dsDNA into and through the RuvAB complex. HJ branch migration allows RuvC to scan DNA until it finds its consensus sequence, where it cleaves and resolves the cruciform DNA. The sequence is that of Holliday junction branch migration complex subunit RuvA from Salinispora arenicola (strain CNS-205).